A 214-amino-acid polypeptide reads, in one-letter code: uncharacterized protein (214 aa).

This sequence belongs to the HHV-5 UL130 protein family. In terms of assembly, forms the envelope pentamer complex (PC) composed of gH, gL, UL128, UL130, and UL131A. The pentamer interacts with host NRP2.

Its subcellular location is the virion membrane. In terms of biological role, plays a role in viral entry into host cells. Forms a pentameric complex at the surface of the viral envelope together with gH, gL, UL130 and UL131. This complex is required for entry in epithelial, endothelial and myeloid host cells. Mechanistically, engages host receptor(s) including neurophilin 2/NRP2 to mediate infection. This is an uncharacterized protein from Human cytomegalovirus (strain AD169) (HHV-5).